The sequence spans 1017 residues: MAQSNMPHKSDVLSQDELRKKLYQTFKDRGVLDTLQTQLRNQLIHELMHPVLSGEVKPPSISVEGSALLIGASNSLVADHLQRCGYEYSLSVFFPESGLAKEKIFTMQDLLQLIRINPSSSLYKSLISGFDKENKKGFLMSFLKELAEYYQAKESCDAETQTSTTFPSQVSLAEKFQLIDAQFADGFPHRSKLESLETKLNEYKKEVQHQLQVEMCHKLKYFREAEITKVKMEERRKYEKELAEFQNEFERTCQAKNEALISQEKNSLERIKKHREMESKEIYAQRQLLLNDIALLRGREAELKERIETFELTQKLQEEKIKSEAEALERREQNLKNIEDTYDQKLKTELLKYQLELKDDYITRTNKLLEEERKNKEKTIHLQEELTVINSKKEELSKSVKHMKEVELELESVKAQFLAISKQNHLLNEKVREMSDYSQLKEEKVELQAQNKLLKLQLEETRNENLRLLDRITQPPPELVIFQKELQKTEKAMELEHKDFETHRQALEKQLQSEIENSAQLRTQIAEYDASVKRLTVQVAELKSQLKQTQIALENEVYRNPKHSLIHSLSGLLLSGKMAPHSEDKSGDFLNVPLEQNKVIAGAVMSRVPPYVNTATEASSPESDFEFIASSTKAKVRELEQEAERLEKAFRTYYQRATQNPSTSPQPAKSPPSVNSVAALRSIASSSMDRPVSAEDRVVSEQPLGDMLKEEMSDMSKAFMGSVVSRPRRTSSSTRLSSTPHPKSRRSLDNEMYLEGLGRLHMTSSSPLLDRVSASPAASPSPCPERTAQASPVPSRHSFSGLPEQNACLYQRQTETQDKSELSNVDKQSLKDEKFEPPFRWNKTEQFEAEGLHPAGDMPGIDFAVATQSSRLISYDYPSAVQSQTGEQDEQELWELHMKERRQREEQRHNERQEALERERRELGKLEQERRMIEESLKMEMEEELEKSVQDQKDKSAHCENTLEKYMKIIQQRQEESNADKSSKKSGKECSLVDMMMPSDKDESSPGFSHEEPDDMW.

The 33-residue stretch at 69–101 (LIGASNSLVADHLQRCGYEYSLSVFFPESGLAK) folds into the LisH domain. Coiled coils occupy residues 188–557 (PHRS…ENEV) and 626–659 (EFIA…RATQ). The mediates homooligomerization stretch occupies residues 609–666 (PPYVNTATEASSPESDFEFIASSTKAKVRELEQEAERLEKAFRTYYQRATQNPSTSPQ). 4 disordered regions span residues 657–676 (ATQN…SVNS), 685–705 (SSSM…QPLG), 721–749 (GSVV…RSLD), and 769–801 (LDRV…SFSG). A phosphoserine mark is found at Ser-664, Ser-670, Ser-687, Ser-722, Ser-737, Ser-747, Ser-791, and Ser-823. Positions 722 to 740 (SVVSRPRRTSSSTRLSSTP) are enriched in low complexity. Positions 895-966 (ELHMKERRQR…AHCENTLEKY (72 aa)) form a coiled coil. A compositionally biased stretch (basic and acidic residues) spans 897–988 (HMKERRQREE…ADKSSKKSGK (92 aa)). Positions 897–1017 (HMKERRQREE…FSHEEPDDMW (121 aa)) are disordered.

Belongs to the OFD1 family. As to quaternary structure, homooligomer. Interacts with LCA5. Interacts with RUVBL1; the interaction is direct and may mediate interaction with the NuA4 histone acetyltransferase complex. Interacts with SDCCAG8; the interaction is direct. Interacts with MAP1LC3B. Interacts with C2CD3; OFD1 may act as a negative regulator of C2CD3. Forms a complex with KIAA0753/OFIP and CEP20/FOR20; the interaction with CEP20 is detected only in the presence of KIAA0753. Interacts with PCM1; this interaction may be mediated by KIAA0753/OFIP. Interacts with TBC1D31; regulates OFD1 activity in cilium assembly. Phosphorylated. Phosphorylation at Ser-737, by the cAMP-dependent protein kinase PKA, triggers ubiquitination and proteasomal degradation of OFD1. Also increases its interaction with TBC1D31 and regulates its function in ciliogenesis. In terms of processing, ubiquitinated by PJA2, upon phosphorylation at Ser-737 by PKA, leads to the proteasomal degradation of OFD1.

Its subcellular location is the cytoplasm. The protein resides in the cytoskeleton. It localises to the microtubule organizing center. It is found in the centrosome. The protein localises to the centriole. Its subcellular location is the centriolar satellite. The protein resides in the cilium basal body. It localises to the nucleus. In terms of biological role, component of the centrioles controlling mother and daughter centrioles length. Recruits to the centriole IFT88 and centriole distal appendage-specific proteins including CEP164. Involved in the biogenesis of the cilium, a centriole-associated function. The cilium is a cell surface projection found in many vertebrate cells required to transduce signals important for development and tissue homeostasis. Plays an important role in development by regulating Wnt signaling and the specification of the left-right axis. Only OFD1 localized at the centriolar satellites is removed by autophagy, which is an important step in the ciliogenesis regulation. The chain is Centriole and centriolar satellite protein OFD1 (Ofd1) from Mus musculus (Mouse).